We begin with the raw amino-acid sequence, 373 residues long: Ferroptosis suppressor protein 1 (373 aa).

G2 carries N-myristoyl glycine lipidation. Residues 13–29 traverse the membrane as a helical segment; the sequence is VVVVGGGFGGTAAASLL. 6-hydroxy-FAD-binding positions include 17 to 21, R53, and V81; that span reads GGGFG. Residue K167 is modified to N6-acetyllysine. D284 contacts 6-hydroxy-FAD.

It belongs to the FAD-dependent oxidoreductase family. Requires 6-hydroxy-FAD as cofactor. N-myristoylation at Gly-2 mediates the recruitment to lipid droplets and plasma membrane. In terms of processing, acetylation at Lys-167 prevents AIFM2 ubiquitination and degradation, thereby inhibiting ferroptosis. KAT2B mediates acetylation at Lys-167, while HDAC3 removes it. Post-translationally, ubiquitinated. AIFM2 undergoes 'Lys-29'-ubiquitination and proteasomal degradation, which is inhibited by acetylation at Lys-167.

The protein localises to the lipid droplet. Its subcellular location is the cell membrane. The protein resides in the cytoplasm. It localises to the mitochondrion membrane. It is found in the nucleus. The enzyme catalyses ubiquinone-10 + NADH + H(+) = ubiquinol-10 + NAD(+). The catalysed reaction is phylloquinone + NADH + H(+) = phylloquinol + NAD(+). It carries out the reaction menaquinone-4 + NADH + H(+) = menaquinol-4 + NAD(+). It catalyses the reaction menadione + NADH + H(+) = menadiol + NAD(+). Its activity is regulated as follows. The modification by 4-hydroxy-2-nonenal (HNE) adduction in mitochondria results in loss of the oxidoreductase activity and activation of a novel function in mitochondrial oxidative stress signaling. An NAD(P)H-dependent oxidoreductase that acts as a key inhibitor of ferroptosis. At the plasma membrane, catalyzes reduction of coenzyme Q/ubiquinone-10 to ubiquinol-10, a lipophilic radical-trapping antioxidant that prevents lipid oxidative damage and consequently ferroptosis. Acts in parallel to GPX4 to suppress phospholipid peroxidation and ferroptosis. This anti-ferroptotic function is independent of cellular glutathione levels. Also acts as a potent radical-trapping antioxidant by mediating warfarin-resistant vitamin K reduction in the canonical vitamin K cycle: catalyzes NAD(P)H-dependent reduction of vitamin K (phylloquinone, menaquinone-4 and menadione) to hydroquinone forms. Hydroquinones act as potent radical-trapping antioxidants inhibitor of phospholipid peroxidation and ferroptosis. May play a role in mitochondrial stress signaling. Upon oxidative stress, associates with the lipid peroxidation end product 4-hydroxy-2-nonenal (HNE) forming a lipid adduct devoid of oxidoreductase activity, which then translocates from mitochondria into the nucleus triggering DNA damage and cell death. This chain is Ferroptosis suppressor protein 1 (AIFM2), found in Taeniopygia guttata (Zebra finch).